A 695-amino-acid polypeptide reads, in one-letter code: Elongation factor G (695 aa).

The tr-type G domain occupies 12–286 (DKLRNIGIMA…AVIDYLPSPL (275 aa)). GTP contacts are provided by residues 21 to 28 (AHIDAGKT), 85 to 89 (DTPGH), and 139 to 142 (NKMD).

It belongs to the TRAFAC class translation factor GTPase superfamily. Classic translation factor GTPase family. EF-G/EF-2 subfamily.

It is found in the cytoplasm. Its function is as follows. Catalyzes the GTP-dependent ribosomal translocation step during translation elongation. During this step, the ribosome changes from the pre-translocational (PRE) to the post-translocational (POST) state as the newly formed A-site-bound peptidyl-tRNA and P-site-bound deacylated tRNA move to the P and E sites, respectively. Catalyzes the coordinated movement of the two tRNA molecules, the mRNA and conformational changes in the ribosome. The protein is Elongation factor G of Thermotoga petrophila (strain ATCC BAA-488 / DSM 13995 / JCM 10881 / RKU-1).